We begin with the raw amino-acid sequence, 206 residues long: ATP-dependent Clp protease proteolytic subunit 2 (206 aa).

The Nucleophile role is filled by Ser100. Residue His125 is part of the active site.

Belongs to the peptidase S14 family. Fourteen ClpP subunits assemble into 2 heptameric rings which stack back to back to give a disk-like structure with a central cavity, resembling the structure of eukaryotic proteasomes.

The protein resides in the cytoplasm. The enzyme catalyses Hydrolysis of proteins to small peptides in the presence of ATP and magnesium. alpha-casein is the usual test substrate. In the absence of ATP, only oligopeptides shorter than five residues are hydrolyzed (such as succinyl-Leu-Tyr-|-NHMec, and Leu-Tyr-Leu-|-Tyr-Trp, in which cleavage of the -Tyr-|-Leu- and -Tyr-|-Trp bonds also occurs).. Functionally, cleaves peptides in various proteins in a process that requires ATP hydrolysis. Has a chymotrypsin-like activity. Plays a major role in the degradation of misfolded proteins. This chain is ATP-dependent Clp protease proteolytic subunit 2, found in Myxococcus xanthus.